Consider the following 141-residue polypeptide: Small ribosomal subunit protein uS12 (141 aa).

The segment at 118-141 (TGVDKRRQQRSAYGAKRPKADKKK) is disordered.

It belongs to the universal ribosomal protein uS12 family. Part of the 30S ribosomal subunit. Contacts proteins S8 and S17. May interact with IF1 in the 30S initiation complex.

Its function is as follows. With S4 and S5 plays an important role in translational accuracy. Interacts with and stabilizes bases of the 16S rRNA that are involved in tRNA selection in the A site and with the mRNA backbone. Located at the interface of the 30S and 50S subunits, it traverses the body of the 30S subunit contacting proteins on the other side and probably holding the rRNA structure together. The combined cluster of proteins S8, S12 and S17 appears to hold together the shoulder and platform of the 30S subunit. In Mycoplasmoides gallisepticum (strain R(low / passage 15 / clone 2)) (Mycoplasma gallisepticum), this protein is Small ribosomal subunit protein uS12.